Reading from the N-terminus, the 620-residue chain is Synchronized import protein 1 (620 aa).

The segment at M1 to V32 is disordered. ARM repeat units lie at residues D25–E64, A66–L106, D181–D221, A258–P299, I340–P386, D435–L470, I471–M510, and R564–S607.

The protein belongs to the nuclear import and ribosome assembly adapter family. As to quaternary structure, forms a heterotrimeric complex with RPL5 and RPL11A or RPL11B; interaction of this complex with KAP104 allows the nuclear import of the heterotrimer. Component of a hexameric 5S RNP precursor complex, composed of 5S RNA, RRS1, RPF2, RPL5, RPL11A/RPL11B and SYO1; this complex acts as a precursor for ribosome assembly.

Its subcellular location is the cytoplasm. It is found in the nucleus. Its function is as follows. Nuclear import adapter that specifically recruits the two functionally and topologically linked ribosomal proteins RPL5 and RPL11 (encoded by RPL11A and RPL11B). Guarantees that this cargo pair remains bound together from the time of synthesis in the cytoplasm until delivery to the nascent 5S rRNA in the nucleus. This Saccharomyces cerevisiae (strain ATCC 204508 / S288c) (Baker's yeast) protein is Synchronized import protein 1 (SYO1).